The following is a 140-amino-acid chain: uncharacterized protein (140 aa).

Residue Asn86 is glycosylated (N-linked (GlcNAc...) asparagine; by host). The helical transmembrane segment at 92–112 threads the bilayer; it reads IFNGLGFILIVIFIYLLLITL.

This sequence belongs to the asfivirus B117L family.

The protein resides in the host membrane. It is found in the virion. This is an uncharacterized protein from African swine fever virus (isolate Pig/Kenya/KEN-50/1950) (ASFV).